A 262-amino-acid polypeptide reads, in one-letter code: ATP synthase subunit a (262 aa).

The next 5 membrane-spanning stretches (helical) occupy residues 25 to 45 (NVHI…LAVF), 86 to 106 (VAPL…IDLI), 130 to 150 (DISA…FYTV), 204 to 226 (LIFI…GIPL), and 240 to 260 (LQAF…YNKA).

The protein belongs to the ATPase A chain family. As to quaternary structure, F-type ATPases have 2 components, CF(1) - the catalytic core - and CF(0) - the membrane proton channel. CF(1) has five subunits: alpha(3), beta(3), gamma(1), delta(1), epsilon(1). CF(0) has three main subunits: a(1), b(2) and c(9-12). The alpha and beta chains form an alternating ring which encloses part of the gamma chain. CF(1) is attached to CF(0) by a central stalk formed by the gamma and epsilon chains, while a peripheral stalk is formed by the delta and b chains.

The protein resides in the cell inner membrane. Key component of the proton channel; it plays a direct role in the translocation of protons across the membrane. In Mannheimia succiniciproducens (strain KCTC 0769BP / MBEL55E), this protein is ATP synthase subunit a.